Reading from the N-terminus, the 852-residue chain is Thrombospondin type-1 domain-containing protein 1 (852 aa).

Residues 1-24 (MKPMLKDFSNLLLVVLCDYVLGEA) form the signal peptide. Topologically, residues 25–413 (EYLLLREPGH…QPQGPVKSNN (389 aa)) are extracellular. N-linked (GlcNAc...) asparagine glycosylation is found at N39, N53, N58, N69, N80, N135, and N304. The TSP type-1 domain maps to 340-393 (TETWGLWQPWSQCSATCGDGVRERRRVCLTSFPSSPVCPGMSLEASLCSLEECA). Intrachain disulfides connect C352/C387, C356/C392, and C367/C377. A helical transmembrane segment spans residues 414 to 434 (IVTVTGISLCLFIIIATVLIT). The Cytoplasmic segment spans residues 435–852 (LWRRFGRPAK…STLSVEKLVI (418 aa)). 2 disordered regions span residues 444-517 (KCST…ESFQ) and 624-799 (LIRK…RKDK). S463 carries the phosphoserine modification. Residues 645–654 (ARNAHFRRTA) are compositionally biased toward basic residues. Over residues 655-669 (SFHEARQARPFRERS) the composition is skewed to basic and acidic residues. Residues 670 to 685 (MSTLTPRQAPAYSSRT) show a composition bias toward polar residues. The span at 686-696 (RTCEQAEDRFR) shows a compositional bias: basic and acidic residues. Composition is skewed to polar residues over residues 766 to 778 (SHKS…SSPI) and 785 to 794 (QRVSSLSPSQ).

As to quaternary structure, part of a complex composed of THSD1, PTK2/FAK1, TLN1 and VCL. Interacts with TLN1.

The protein resides in the endosome membrane. Its subcellular location is the cell junction. It localises to the focal adhesion. The protein localises to the membrane. It is found in the secreted. In terms of biological role, is a positive regulator of nascent focal adhesion assembly, involved in the modulation of endothelial cell attachment to the extracellular matrix. The chain is Thrombospondin type-1 domain-containing protein 1 (THSD1) from Homo sapiens (Human).